Here is a 196-residue protein sequence, read N- to C-terminus: MTPDDLLEEFRAAGALLEGHFILSSGLHSAVFLQKMAIFSDPVRTARVCAGLASVIRDRYGAVDLVVSPAIGGIVPGYETARALGARAIFVERDPGGPFQLRRGFSIPAGSRAVMVEDIVTTGLSSRECLAALRDQPGEVVGAACLIDRSGGRADLGAPLVALATLDIPNYPADQLPPDLAAIPAVKPGSRATTPG.

Residue 117–125 (EDIVTTGLS) participates in 5-phospho-alpha-D-ribose 1-diphosphate binding. 2 residues coordinate orotate: threonine 121 and arginine 149.

Belongs to the purine/pyrimidine phosphoribosyltransferase family. PyrE subfamily. In terms of assembly, homodimer. Requires Mg(2+) as cofactor.

It carries out the reaction orotidine 5'-phosphate + diphosphate = orotate + 5-phospho-alpha-D-ribose 1-diphosphate. The protein operates within pyrimidine metabolism; UMP biosynthesis via de novo pathway; UMP from orotate: step 1/2. Functionally, catalyzes the transfer of a ribosyl phosphate group from 5-phosphoribose 1-diphosphate to orotate, leading to the formation of orotidine monophosphate (OMP). The chain is Orotate phosphoribosyltransferase from Methylobacterium sp. (strain 4-46).